The chain runs to 506 residues: NAD(P)H-quinone oxidoreductase subunit 2 (506 aa).

13 consecutive transmembrane segments (helical) span residues 14–34 (AIIP…VDLA), 42–62 (WAPS…TLQW), 79–99 (LAIA…LISW), 108–128 (PIGE…LLCG), 132–152 (LISV…LSGY), 167–187 (LLVG…LYGL), 206–226 (FITS…IAAV), 240–260 (PTPV…AFAI), 276–296 (LLFT…ALAQ), 302–322 (MLAY…VSGT), 330–350 (VLYL…VILF), 374–394 (LGLS…GFFG), and 409–429 (LLVI…ISVI).

Belongs to the complex I subunit 2 family. As to quaternary structure, NDH-1 can be composed of about 15 different subunits; different subcomplexes with different compositions have been identified which probably have different functions.

The protein localises to the cellular thylakoid membrane. The enzyme catalyses a plastoquinone + NADH + (n+1) H(+)(in) = a plastoquinol + NAD(+) + n H(+)(out). The catalysed reaction is a plastoquinone + NADPH + (n+1) H(+)(in) = a plastoquinol + NADP(+) + n H(+)(out). NDH-1 shuttles electrons from an unknown electron donor, via FMN and iron-sulfur (Fe-S) centers, to quinones in the respiratory and/or the photosynthetic chain. The immediate electron acceptor for the enzyme in this species is believed to be plastoquinone. Couples the redox reaction to proton translocation, and thus conserves the redox energy in a proton gradient. Cyanobacterial NDH-1 also plays a role in inorganic carbon-concentration. The protein is NAD(P)H-quinone oxidoreductase subunit 2 of Prochlorococcus marinus (strain MIT 9301).